The primary structure comprises 327 residues: Annexin A8 (327 aa).

Annexin repeat units lie at residues 21–92, 93–164, 177–249, and 253–324; these read FNPD…ALMY, PPYS…CLLQ, GLVL…TVVK, and NVHS…NLVG. Ca(2+) is bound by residues Met266, Gly268, Gly270, and Asp310.

Belongs to the annexin family.

This protein is an anticoagulant protein that acts as an indirect inhibitor of the thromboplastin-specific complex, which is involved in the blood coagulation cascade. This chain is Annexin A8 (Anxa8), found in Mus musculus (Mouse).